The primary structure comprises 550 residues: Chaperonin GroEL 1 (550 aa).

Residues 29-32 (TIGP), 86-90 (DGTTT), Gly413, 477-479 (NAA), and Asp493 each bind ATP. The segment at 524–550 (AVSDGDHGHSHGHGHSHGHSHPQGPGF) is disordered. Basic residues predominate over residues 533–543 (SHGHGHSHGHS).

Belongs to the chaperonin (HSP60) family. As to quaternary structure, forms a cylinder of 14 subunits composed of two heptameric rings stacked back-to-back. Interacts with the co-chaperonin GroES.

The protein resides in the cytoplasm. It carries out the reaction ATP + H2O + a folded polypeptide = ADP + phosphate + an unfolded polypeptide.. Its function is as follows. Together with its co-chaperonin GroES, plays an essential role in assisting protein folding. The GroEL-GroES system forms a nano-cage that allows encapsulation of the non-native substrate proteins and provides a physical environment optimized to promote and accelerate protein folding. In Frankia alni (strain DSM 45986 / CECT 9034 / ACN14a), this protein is Chaperonin GroEL 1.